Reading from the N-terminus, the 261-residue chain is tRNA (guanine-N(1)-)-methyltransferase (261 aa).

Residues glycine 113 and 133–138 (IGDYVL) contribute to the S-adenosyl-L-methionine site.

This sequence belongs to the RNA methyltransferase TrmD family. As to quaternary structure, homodimer.

Its subcellular location is the cytoplasm. It catalyses the reaction guanosine(37) in tRNA + S-adenosyl-L-methionine = N(1)-methylguanosine(37) in tRNA + S-adenosyl-L-homocysteine + H(+). Functionally, specifically methylates guanosine-37 in various tRNAs. The chain is tRNA (guanine-N(1)-)-methyltransferase from Xylella fastidiosa (strain M23).